The following is a 160-amino-acid chain: Putative pre-16S rRNA nuclease (160 aa).

It belongs to the YqgF nuclease family.

Its subcellular location is the cytoplasm. In terms of biological role, could be a nuclease involved in processing of the 5'-end of pre-16S rRNA. The sequence is that of Putative pre-16S rRNA nuclease from Cereibacter sphaeroides (strain KD131 / KCTC 12085) (Rhodobacter sphaeroides).